Consider the following 594-residue polypeptide: MHRYRSHTCEELRPSDVGGTVRLSGWVHRVRDHGGLLFIDLRDHYGITQIVADPDSPSFSTAEKLRSEWVIRVDGEVKARTPETVNPNLATGGVEVFAREIEVLSQAKELPLPVFGEPDYPEDIRLKYRFLDLRRETLHRNILARTKIIAEMRKRMAESGFTEFSTPILTASSPEGARDFLVPSRLHQGKFYALPQAPQIYKQLIMVSGFDRYFQIAPCFRDEDPRADRLPGEFYQLDLEMSFVTQEDVFSTMEPVMRGIFEAFAEGKPVTQKLPRIPYDEAMRKYGSDKPDLRNPIVMEEVSEHFRGSGFKVFANILANDPKAEVWAIPAKTGGSRAFCDRMNSWAQGEGQPGLGYIFWRKEGDTLEGAGPIAKNIGPERTDAIRTQLGLGDGDACFFVAGDPKKFVAFAGAARTRAGEELNLVDRDRFELAWIVDFPFYEWNEDEKRIEFGHNPFSMPQGGMEALENQEPLSIKAFQYDLVCNGFEIASGGIRNHMPELMVKAFEVAGFDRQMVEERFGGLYRAFQYGAPPHGGMAAGIDRIVMLLRGAKNLREITMFPMNQQAMDLLMGAPSEATPQQLRELHIRLAPKQD.

Glu175 provides a ligand contact to L-aspartate. The aspartate stretch occupies residues 199-202; it reads QIYK. Arg221 and His454 together coordinate L-aspartate. ATP is bound at residue 221 to 223; it reads RDE. Glu488 lines the ATP pocket. Residue Arg495 participates in L-aspartate binding. Position 540-543 (540-543) interacts with ATP; the sequence is GIDR.

This sequence belongs to the class-II aminoacyl-tRNA synthetase family. Type 1 subfamily. As to quaternary structure, homodimer.

The protein resides in the cytoplasm. It carries out the reaction tRNA(Asx) + L-aspartate + ATP = L-aspartyl-tRNA(Asx) + AMP + diphosphate. Its function is as follows. Aspartyl-tRNA synthetase with relaxed tRNA specificity since it is able to aspartylate not only its cognate tRNA(Asp) but also tRNA(Asn). Reaction proceeds in two steps: L-aspartate is first activated by ATP to form Asp-AMP and then transferred to the acceptor end of tRNA(Asp/Asn). This Chelativorans sp. (strain BNC1) protein is Aspartate--tRNA(Asp/Asn) ligase.